Consider the following 141-residue polypeptide: Transcriptional regulator MraZ (141 aa).

2 SpoVT-AbrB domains span residues 5–47 and 76–119; these read EFEH…PAER and AAEC…GAEH.

Belongs to the MraZ family. Forms oligomers.

It is found in the cytoplasm. The protein localises to the nucleoid. The chain is Transcriptional regulator MraZ from Lactiplantibacillus plantarum (strain ATCC BAA-793 / NCIMB 8826 / WCFS1) (Lactobacillus plantarum).